The chain runs to 123 residues: uncharacterized protein (123 aa).

2 helical membrane passes run 1 to 21 (MVLP…AVGC) and 103 to 123 (LESS…ILLF).

Its subcellular location is the membrane. This is an uncharacterized protein from Saccharomyces cerevisiae (strain ATCC 204508 / S288c) (Baker's yeast).